Consider the following 446-residue polypeptide: Fatty acid desaturase 2 (446 aa).

The Cytoplasmic portion of the chain corresponds to 1-132; sequence MGMGGQSGEG…EDMRLFKSNP (132 aa). The Cytochrome b5 heme-binding domain occupies 20-97; sequence EAQYSWEEIQ…LKPLYIGELA (78 aa). Residues 133-153 form a helical membrane-spanning segment; the sequence is AFFIFYLFHILLIEFLAWCTL. A topological domain (lumenal) is located at residue His154. The chain crosses the membrane as a helical span at residues 155 to 175; sequence YLGTGWIPAIITVLLLTISQA. Topologically, residues 176-265 are cytoplasmic; it reads QAGWLQHDFG…IKYLPYNHQH (90 aa). Residues 182-186 carry the Histidine box-1 motif; it reads HDFGH. The Histidine box-2 motif lies at 219 to 223; that stretch reads HFQHH. The chain crosses the membrane as a helical span at residues 266-286; it reads LYFFLIGPPLLIPVYFTVQII. Over 287–307 the chain is Lumenal; it reads KTMIARKDWVDLAWSVSYYVR. Residues 308–328 form a helical membrane-spanning segment; it reads FFFTFVPFFGVLGSLALLNAV. Residues 329–446 lie on the Cytoplasmic side of the membrane; it reads RFFESHWFVW…QLWLDAYLHK (118 aa). The short motif at 384–388 is the Histidine box-3 element; it reads QIEHH.

It belongs to the fatty acid desaturase type 1 family.

Its subcellular location is the endoplasmic reticulum membrane. The protein operates within lipid metabolism; polyunsaturated fatty acid biosynthesis. In terms of biological role, component of a lipid metabolic pathway that catalyzes biosynthesis of highly unsaturated fatty acids (HUFA) from precursor essential polyunsaturated fatty acids (PUFA) linoleic acid (LA) (18:2n-6) and alpha-linolenic acid (ALA) (18:3n-3). Catalyzes the first and rate limiting step in this pathway which is the desaturation of LA (18:2n-6) and ALA (18:3n-3) into gamma-linoleic acid (GLA) (18:3n-6) and stearidonic acid (18:4n-3) respectively and other desaturation steps. Highly unsaturated fatty acids (HUFA) play pivotal roles in many biological functions. In Xenopus laevis (African clawed frog), this protein is Fatty acid desaturase 2 (fads2).